A 572-amino-acid polypeptide reads, in one-letter code: Phosphoglucomutase-1 (572 aa).

Residues T23, R27, 120–121, and K133 each bind substrate; that span reads SH. The Phosphoserine intermediate role is filled by S120. A Mg(2+)-binding site is contributed by S120. D288, D290, and D292 together coordinate Mg(2+). Substrate is bound by residues 292–293, T356, 375–377, K388, and R524; these read DR and EES.

Belongs to the phosphohexose mutase family. Mg(2+) is required as a cofactor.

It localises to the cytoplasm. It catalyses the reaction alpha-D-glucose 1-phosphate = alpha-D-glucose 6-phosphate. Its function is as follows. This enzyme participates in both the breakdown and synthesis of glucose. This is Phosphoglucomutase-1 (pgmA) from Dictyostelium discoideum (Social amoeba).